A 562-amino-acid chain; its full sequence is Carboxylesterase 1E (562 aa).

Residues M1–G19 form the signal peptide. An N-linked (GlcNAc...) asparagine glycan is attached at N80. A disulfide bridge links C88 with C117. The active-site Acyl-ester intermediate is the S222. The cysteines at positions 274 and 285 are disulfide-linked. The N-linked (GlcNAc...) asparagine glycan is linked to N276. Active-site charge relay system residues include E354 and H467. Residue N490 is glycosylated (N-linked (GlcNAc...) asparagine). Residues H559 to L562 carry the Prevents secretion from ER motif.

This sequence belongs to the type-B carboxylesterase/lipase family.

Its subcellular location is the endoplasmic reticulum lumen. The protein resides in the microsome membrane. It catalyses the reaction a carboxylic ester + H2O = an alcohol + a carboxylate + H(+). It carries out the reaction all-trans-retinyl hexadecanoate + H2O = all-trans-retinol + hexadecanoate + H(+). Its function is as follows. Involved in the detoxification of xenobiotics and in the activation of ester and amide prodrugs. Hydrolyzes retinyl esters. This Mus musculus (Mouse) protein is Carboxylesterase 1E.